A 133-amino-acid polypeptide reads, in one-letter code: Ribonuclease P protein component (133 aa).

Belongs to the RnpA family. Consists of a catalytic RNA component (M1 or rnpB) and a protein subunit.

It carries out the reaction Endonucleolytic cleavage of RNA, removing 5'-extranucleotides from tRNA precursor.. Functionally, RNaseP catalyzes the removal of the 5'-leader sequence from pre-tRNA to produce the mature 5'-terminus. It can also cleave other RNA substrates such as 4.5S RNA. The protein component plays an auxiliary but essential role in vivo by binding to the 5'-leader sequence and broadening the substrate specificity of the ribozyme. This chain is Ribonuclease P protein component, found in Bartonella quintana (strain Toulouse) (Rochalimaea quintana).